Consider the following 284-residue polypeptide: Bifunctional protein FolD 1 (284 aa).

Residues 166-168 (GAS) and I232 contribute to the NADP(+) site.

The protein belongs to the tetrahydrofolate dehydrogenase/cyclohydrolase family. In terms of assembly, homodimer.

It catalyses the reaction (6R)-5,10-methylene-5,6,7,8-tetrahydrofolate + NADP(+) = (6R)-5,10-methenyltetrahydrofolate + NADPH. It carries out the reaction (6R)-5,10-methenyltetrahydrofolate + H2O = (6R)-10-formyltetrahydrofolate + H(+). Its pathway is one-carbon metabolism; tetrahydrofolate interconversion. In terms of biological role, catalyzes the oxidation of 5,10-methylenetetrahydrofolate to 5,10-methenyltetrahydrofolate and then the hydrolysis of 5,10-methenyltetrahydrofolate to 10-formyltetrahydrofolate. The polypeptide is Bifunctional protein FolD 1 (Pseudomonas syringae pv. tomato (strain ATCC BAA-871 / DC3000)).